The chain runs to 191 residues: UPF0149 protein plu3602 (191 aa).

This sequence belongs to the UPF0149 family.

The chain is UPF0149 protein plu3602 from Photorhabdus laumondii subsp. laumondii (strain DSM 15139 / CIP 105565 / TT01) (Photorhabdus luminescens subsp. laumondii).